The chain runs to 953 residues: Coatomer subunit beta (953 aa).

HEAT repeat units lie at residues 17 to 54 (DSEPPSEISLKNDLEKGDVKLKTEALKKVIIMILNGEK), 96 to 131 (QEMILVCDAYRKDLQHPNEFIRGSTLRFLCKLKEAE), 132 to 168 (LLEPLMPAIRACLEHRHSYVRRNAVLAIYTIYRNFEH), 240 to 276 (SERARFIRCIYNLLQSSSPAVKYEAAGTLVTLSSAPT), 277 to 314 (AIKAAAQCYIDLIIKESDNNVKLIVLDRLVELKEHPSH), 316 to 353 (RVLQDLVMDILRVLSTPDLEVRKKTLQLALDLVSSRNV), and 396 to 433 (DMAANVIPVLMEFLSDNNEAAAADVLEFVREAIQRFDN).

Oligomeric complex that consists of at least the alpha, beta, beta', gamma, delta, epsilon and zeta subunits.

It is found in the cytoplasm. The protein resides in the golgi apparatus membrane. It localises to the cytoplasmic vesicle. Its subcellular location is the COPI-coated vesicle membrane. Functionally, the coatomer is a cytosolic protein complex that binds to dilysine motifs and reversibly associates with Golgi non-clathrin-coated vesicles, which further mediate biosynthetic protein transport from the ER, via the Golgi up to the trans Golgi network. Coatomer complex is required for budding from Golgi membranes, and is essential for the retrograde Golgi-to-ER transport of dilysine-tagged proteins. The chain is Coatomer subunit beta (COPB1) from Gallus gallus (Chicken).